Consider the following 80-residue polypeptide: OMEGA-myrmeciitoxin(02)-Mg1a (80 aa).

A signal peptide spans 1–30 (MKNNYISTCIVYLMAALLLISVISIKECTA). One can recognise an EGF-like domain in the interval 35 to 75 (YGDPCSDDLKDYCIHGDCFFLKELNQPACRCYTGYYGSRCE). Disulfide bonds link Cys-39-Cys-52, Cys-47-Cys-63, and Cys-65-Cys-74.

The protein belongs to the EGF domain peptide family. As to expression, expressed by the venom gland.

It localises to the secreted. Ant peptide with probable defensive activity which acts as a potent agonist of the mammalian epidermal growth factor receptor (EGFR) (EC(50)=6.3 nM). Mimics, both structurally and functionally, vertebrate epidermal growth factor (EGF) peptide hormones. In vivo, intraplantar injection in mice causes long-lasting (several days) hypersensitivity of the injected paw to both mechanical and thermal stimuli. Its long-lasting effect is unusual for venom toxins whose effects are usually immediate. One possible explanation is that it would reduce the duration of a nest attack, discourage future attacks, or enhance the actions of subsequent exposure to other pain-inducing venom peptides. The protein is OMEGA-myrmeciitoxin(02)-Mg1a of Myrmecia gulosa (Red bulldog ant).